We begin with the raw amino-acid sequence, 842 residues long: Probable vinculin (842 aa).

Positions K585 to A679 form a coiled coil.

Belongs to the vinculin/alpha-catenin family. As to quaternary structure, monomer. Associates with F-actin. Interacts with aarA, ctxA, ctxB and rgaA. In terms of tissue distribution, epithelium.

It localises to the cytoplasm. Its subcellular location is the cell cortex. The protein resides in the cell junction. Involved in cell adhesion. Thought to play an important role in cytokinesis B, probably by providing substrate adhesion and traction forces. Required to organize and polarize the tip epithelium during cytokinesis. Required for the normal distribution of myosin in the tip epithelium. Involved in the localization of ctxA, ctxB, dcsA, exoc6 and rgaA. Thought to form a complex with ctxA, ctxB, and rgaA which regulates myosin accumulation to the apical plasma membrane. The protein is Probable vinculin (ctnnA) of Dictyostelium discoideum (Social amoeba).